Consider the following 687-residue polypeptide: POZ (BTB) and AT hook-containing zinc finger 1 (687 aa).

Positions cysteine 41–leucine 130 constitute a BTB domain. Polar residues predominate over residues proline 250–proline 260. Residues proline 250–methionine 279 are disordered. The C2H2-type 1 zinc-finger motif lies at leucine 292–histidine 314. The tract at residues glycine 332–threonine 351 is disordered. 5 C2H2-type zinc fingers span residues valine 355–histidine 377, tyrosine 383–histidine 405, tyrosine 413–histidine 436, histidine 442–histidine 464, and asparagine 495–histidine 517. The disordered stretch occupies residues serine 564–serine 587. The C2H2-type 7 zinc-finger motif lies at tyrosine 605–histidine 628.

Homodimer. Interacts with RNF4. Interacts (via C-terminus) with TP53; this interaction inhibits TP53 ability to activate transcription. In terms of tissue distribution, widely expressed at high levels during embryogenesis, especially in the central nervous system, especially to the actively proliferating neuroblasts in the periventricular neocortical neuroepithelium, in the telencephalic cortical plate and in the hippocampus. Also expressed in a stage-specific manner in the mouse germinal epithelium. While strongly expressed during brain development,m its expression turns down in adult brain.

It is found in the nucleus. Its function is as follows. Transcriptional regulator that plays a role in many biological processes such as embryogenesis, senescence, T-cell development or neurogenesis. Interacts with the TP53 protein to control genes that are important in proliferation and in the DNA-damage response. Mechanistically, the interaction inhibits the DNA binding and transcriptional activity of TP53/p53. Part of the transcriptional network modulating regulatory T-cell development and controls the generation of the regulatory T-cell pool under homeostatic conditions. The polypeptide is POZ (BTB) and AT hook-containing zinc finger 1 (Mus musculus (Mouse)).